The chain runs to 207 residues: Large ribosomal subunit protein uL4 (207 aa).

The tract at residues 48 to 75 (THSVKNRSAVRGGGRKPWRQKGTGRARQ) is disordered. Residues 60–71 (GGRKPWRQKGTG) show a composition bias toward basic residues.

The protein belongs to the universal ribosomal protein uL4 family. As to quaternary structure, part of the 50S ribosomal subunit.

Functionally, one of the primary rRNA binding proteins, this protein initially binds near the 5'-end of the 23S rRNA. It is important during the early stages of 50S assembly. It makes multiple contacts with different domains of the 23S rRNA in the assembled 50S subunit and ribosome. Its function is as follows. Forms part of the polypeptide exit tunnel. The sequence is that of Large ribosomal subunit protein uL4 from Staphylococcus carnosus (strain TM300).